Reading from the N-terminus, the 880-residue chain is Nonsense-mediated mRNA decay factor SMG7-like (880 aa).

TPR repeat units follow at residues 149–183 (QEQY…NPHN) and 184–217 (QLAV…GASN). Residues 669–711 (RLGLSKPNGLGPIDETGPVSAFDSLSINSSTEHPASSYSPPTP) form a disordered region. The segment covering 691–701 (DSLSINSSTEH) has biased composition (polar residues).

May play a role in growth and development. This is Nonsense-mediated mRNA decay factor SMG7-like from Arabidopsis thaliana (Mouse-ear cress).